We begin with the raw amino-acid sequence, 361 residues long: tRNA/tmRNA (uracil-C(5))-methyltransferase (361 aa).

The S-adenosyl-L-methionine site is built by Gln-185, Tyr-213, Asn-218, Glu-234, and Asp-294. The active-site Nucleophile is the Cys-319. Glu-353 acts as the Proton acceptor in catalysis.

The protein belongs to the class I-like SAM-binding methyltransferase superfamily. RNA M5U methyltransferase family. TrmA subfamily.

The enzyme catalyses uridine(54) in tRNA + S-adenosyl-L-methionine = 5-methyluridine(54) in tRNA + S-adenosyl-L-homocysteine + H(+). It catalyses the reaction uridine(341) in tmRNA + S-adenosyl-L-methionine = 5-methyluridine(341) in tmRNA + S-adenosyl-L-homocysteine + H(+). In terms of biological role, dual-specificity methyltransferase that catalyzes the formation of 5-methyluridine at position 54 (m5U54) in all tRNAs, and that of position 341 (m5U341) in tmRNA (transfer-mRNA). This chain is tRNA/tmRNA (uracil-C(5))-methyltransferase, found in Pseudomonas syringae pv. syringae (strain B728a).